A 322-amino-acid chain; its full sequence is ATP-dependent 6-phosphofructokinase (322 aa).

ATP is bound at residue Gly-11. Residue 21-25 (RAVVR) participates in ADP binding. ATP contacts are provided by residues 72 to 73 (RC) and 102 to 105 (GDGS). Asp-103 is a Mg(2+) binding site. 127 to 129 (TID) contacts substrate. Catalysis depends on Asp-129, which acts as the Proton acceptor. Arg-156 lines the ADP pocket. Substrate is bound by residues Arg-164 and 171–173 (MGR). Residues 187 to 189 (GAE), Arg-213, and 215 to 217 (KKH) contribute to the ADP site. Substrate-binding positions include Glu-224, Arg-245, and 251-254 (HIQR).

It belongs to the phosphofructokinase type A (PFKA) family. ATP-dependent PFK group I subfamily. Prokaryotic clade 'B1' sub-subfamily. In terms of assembly, homotetramer. The cofactor is Mg(2+).

The protein resides in the cytoplasm. It catalyses the reaction beta-D-fructose 6-phosphate + ATP = beta-D-fructose 1,6-bisphosphate + ADP + H(+). The protein operates within carbohydrate degradation; glycolysis; D-glyceraldehyde 3-phosphate and glycerone phosphate from D-glucose: step 3/4. With respect to regulation, allosterically activated by ADP and other diphosphonucleosides, and allosterically inhibited by phosphoenolpyruvate. Catalyzes the phosphorylation of D-fructose 6-phosphate to fructose 1,6-bisphosphate by ATP, the first committing step of glycolysis. This is ATP-dependent 6-phosphofructokinase from Staphylococcus carnosus (strain TM300).